Here is a 358-residue protein sequence, read N- to C-terminus: MREYKIAAIPADGIGPEVIAAGLQVLEALEKRSGDFSIHTETFDWGSDYYKKNGVMMPADGLEQLKKFDAIFFGAVGAPDVPDHITLWGLRLPICQGFDQYANVRPTKVLPGITPPLRNCGPGDLDWVIVRENSEGEYSGHGGRAHKGLPEEVGTEVAIFTRVGVTRIMRYAFKLAQARPRKLLTVVTKSNAQRHGMVMWDEIAAEVSKEFPDVTWDKMLVDAMTVRMTLKPQSLDTIVATNLHADILSDLAGALAGSLGVAPTANIDPERRFPSMFEPIHGSAFDITGKGIANPVATFWTAAQMLEHLGEKDAATRLMSAVERVTEAGILTPDVGGTANTQQVTDAVCEAIAGSNIL.

Residues Asp222, Asp246, and Asp250 each coordinate Mn(2+).

This sequence belongs to the isocitrate and isopropylmalate dehydrogenases family. It depends on Mg(2+) as a cofactor. Requires Mn(2+) as cofactor. The cofactor is K(+).

It is found in the cytoplasm. The catalysed reaction is tartrate + NAD(+) = 2-hydroxy-3-oxosuccinate + NADH + H(+). It carries out the reaction (2R,3S)-tartrate + NAD(+) = 2-hydroxy-3-oxosuccinate + NADH + H(+). The enzyme catalyses (2R,3R)-tartrate + NAD(+) = 2-hydroxy-3-oxosuccinate + NADH + H(+). It catalyses the reaction (2R,3R)-tartrate + H(+) = (R)-glycerate + CO2. The catalysed reaction is (R)-malate + NAD(+) = pyruvate + CO2 + NADH. The protein operates within carbohydrate acid metabolism; tartrate degradation; 2-hydroxy-3-oxosuccinate from L-tartrate: step 1/1. It participates in carbohydrate acid metabolism; tartrate degradation; 2-hydroxy-3-oxosuccinate from meso-tartrate: step 1/1. Its pathway is carbohydrate acid metabolism; tartrate degradation; D-glycerate from L-tartrate: step 1/1. Has multiple catalytic activities. Apart from catalyzing the oxidation of (+)-tartrate to oxaloglycolate, also converts meso-tartrate to D-glycerate and catalyzes the oxidative decarboxylation of D-malate to pyruvate. This is Probable tartrate dehydrogenase/decarboxylase TtuC' (ttuC') from Agrobacterium vitis (Rhizobium vitis).